The following is a 348-amino-acid chain: N-formyl peptide receptor 2 (348 aa).

An N-linked (GlcNAc...) asparagine glycan is attached at N1. The Extracellular portion of the chain corresponds to 1-24 (NFSTPLNEYEEGSYESAGYTVLRI). Residues 25-47 (LPLVVLGVTFVLGVLGNGLVIWV) traverse the membrane as a helical segment. Topologically, residues 48-58 (AGFRMTRTVTT) are cytoplasmic. The helical transmembrane segment at 59-80 (ICYLNLALADFSFTATLPFLIV) threads the bilayer. Topologically, residues 81–97 (SMAMGEKWPFGWFLCKL) are extracellular. The cysteines at positions 95 and 173 are disulfide-linked. A helical membrane pass occupies residues 98-118 (IHIVVDINLFGSVFLIGFIAL). Topologically, residues 119-137 (DRCICVLHPVWAQNHRTVS) are cytoplasmic. Residues 138–159 (LAMKVIVGPWILALVLTLPVFL) traverse the membrane as a helical segment. Over 160 to 202 (FLTTVTIPNGDTYCTFNFASWGGTPEERLKVAITLLTARGIIR) the chain is Extracellular. A helical transmembrane segment spans residues 203–223 (FVIGFSLPMSIVAICYGLIAA). Residues 224–239 (KIHKKGMIKSSRPLRV) are Cytoplasmic-facing. The helical transmembrane segment at 240 to 263 (LTAVVASFFICWFPFQLVALLGTV) threads the bilayer. Over 264-283 (WLKEMLFYGKYKIIDILVNP) the chain is Extracellular. The helical transmembrane segment at 284–303 (TSSLAFFNCCLNPMLYVFVG) threads the bilayer. Over 304-348 (QDFRERLIHSLPTSLERALSEDSAPTNDTAANCASPPAETELQAM) the chain is Cytoplasmic. The segment at 322–348 (LSEDSAPTNDTAANCASPPAETELQAM) is disordered. Polar residues predominate over residues 326–335 (SAPTNDTAAN).

This sequence belongs to the G-protein coupled receptor 1 family. In terms of assembly, interacts with Amyloid-beta protein 42, product of APP; the interaction takes place at the cell surface and the complex is then rapidly internalized.

It is found in the cell membrane. Functionally, low affinity receptor for N-formyl-methionyl peptides, which are powerful neutrophil chemotactic factors. Binding of FMLP to the receptor causes activation of neutrophils. This response is mediated via a G-protein that activates a phosphatidylinositol-calcium second messenger system. Receptor for the chemokine-like protein FAM19A5, mediating FAM19A5-stimulated macrophage chemotaxis and the inhibitory effect on TNFSF11/RANKL-induced osteoclast differentiation. The polypeptide is N-formyl peptide receptor 2 (FPR2) (Pan troglodytes (Chimpanzee)).